We begin with the raw amino-acid sequence, 172 residues long: MDSTELRKVFKMFDKNGDGRITKKELGESFKNFGIFIPDDELDATMDKIDANGDGCVDVEEFGLLYRSILGDDAAGRAPRTAAAAIGGEGGAPDDEDEGMREAFNVFDQNGDGFITVDELRSVLSSLGLKHGRTADDCRRMISMVDADGDGRVDFKEFKQMMRGGGFAALGG.

EF-hand domains lie at 1–36 (MDST…FGIF), 37–72 (IPDD…ILGD), 95–130 (DEDE…LGLK), and 133–168 (RTAD…GGFA). Residues Asp14, Asn16, Asp18, Arg20, Glu25, Asp50, Asn52, Asp54, Cys56, Glu61, Asp108, Asn110, Asp112, Glu119, Asp146, Asp148, Asp150, Arg152, and Glu157 each coordinate Ca(2+).

Potential calcium sensor. The sequence is that of Probable calcium-binding protein CML28 (CML28) from Oryza sativa subsp. japonica (Rice).